The following is a 352-amino-acid chain: UDP-N-acetylglucosamine--N-acetylmuramyl-(pentapeptide) pyrophosphoryl-undecaprenol N-acetylglucosamine transferase (352 aa).

Residues Ser195 and Gln287 each contribute to the UDP-N-acetyl-alpha-D-glucosamine site.

This sequence belongs to the glycosyltransferase 28 family. MurG subfamily.

It localises to the cell membrane. The catalysed reaction is Mur2Ac(oyl-L-Ala-gamma-D-Glu-L-Lys-D-Ala-D-Ala)-di-trans,octa-cis-undecaprenyl diphosphate + UDP-N-acetyl-alpha-D-glucosamine = beta-D-GlcNAc-(1-&gt;4)-Mur2Ac(oyl-L-Ala-gamma-D-Glu-L-Lys-D-Ala-D-Ala)-di-trans,octa-cis-undecaprenyl diphosphate + UDP + H(+). Its pathway is cell wall biogenesis; peptidoglycan biosynthesis. Its function is as follows. Cell wall formation. Catalyzes the transfer of a GlcNAc subunit on undecaprenyl-pyrophosphoryl-MurNAc-pentapeptide (lipid intermediate I) to form undecaprenyl-pyrophosphoryl-MurNAc-(pentapeptide)GlcNAc (lipid intermediate II). In Streptococcus pneumoniae (strain Hungary19A-6), this protein is UDP-N-acetylglucosamine--N-acetylmuramyl-(pentapeptide) pyrophosphoryl-undecaprenol N-acetylglucosamine transferase.